The sequence spans 826 residues: DEAD-box ATP-dependent RNA helicase 13 (826 aa).

A compositionally biased stretch (basic and acidic residues) spans 1–10 (MVTGDKESSL). Disordered regions lie at residues 1 to 62 (MVTG…QLDG) and 76 to 175 (HLTL…GDDT). The segment covering 11-22 (MKKRNKRSHKRK) has biased composition (basic residues). The segment covering 49-58 (SFSTLFSGSG) has biased composition (polar residues). The span at 94 to 128 (EDDDDTNETVDEMIEGEEAEEDGEGRDDEDDEDDE) shows a compositional bias: acidic residues. Residues 125-166 (EDDEETRKKKEKKAKRNKEKKKEKKKKKQKKINEAAKNQDAS) are a coiled coil. Basic residues predominate over residues 133 to 154 (KKEKKAKRNKEKKKEKKKKKQK). Positions 190–218 (SAWSSMRLHPLLMKSIYRLDFKEPTKIQK) match the Q motif motif. One can recognise a Helicase ATP-binding domain in the interval 222–439 (NVAAYQGKDV…KLKRGSSKSK (218 aa)). Residue 235–242 (AETGSGKT) participates in ATP binding. The DEAD box motif lies at 363–366 (DEAD). The 169-residue stretch at 476 to 644 (KIEESFIKCE…YMPAVRKRLY (169 aa)) folds into the Helicase C-terminal domain. Coiled coils occupy residues 666 to 712 (LKKH…TLLS) and 783 to 810 (KMKGQSAEKRRDIASLKKKRKEEKIGRR). Residues 783 to 826 (KMKGQSAEKRRDIASLKKKRKEEKIGRRDQRRNQKKQRKLMASS) form a disordered region. Basic and acidic residues-rich tracts occupy residues 788 to 797 (SAEKRRDIAS) and 804 to 814 (EEKIGRRDQRR). The segment covering 815-826 (NQKKQRKLMASS) has biased composition (basic residues).

Belongs to the DEAD box helicase family. DDX24/MAK5 subfamily.

It carries out the reaction ATP + H2O = ADP + phosphate + H(+). This is DEAD-box ATP-dependent RNA helicase 13 (RH13) from Arabidopsis thaliana (Mouse-ear cress).